The primary structure comprises 420 residues: Probable secreted beta-glucosidase SUN4 (420 aa).

Residues 1 to 24 (MKLSATTLTAASLIGYSTIVSALP) form the signal peptide. The tract at residues 89-145 (TKSSSKVASSSESTEQIATTSSSAQTTLTSSETSTSESSVPISTSGSASTSSAASSA) is disordered. An N-linked (GlcNAc...) asparagine glycan is attached at Asn-395.

This sequence belongs to the SUN family. In terms of processing, glycosylated.

It is found in the secreted. It localises to the cell wall. Its function is as follows. Involved in the remodeling of the cell wall during the various phases of yeast culture development and under various environmental conditions and plays a role in septation. The protein is Probable secreted beta-glucosidase SUN4 (SUN4) of Saccharomyces cerevisiae (strain ATCC 204508 / S288c) (Baker's yeast).